Reading from the N-terminus, the 573-residue chain is 60 kDa lysophospholipase (573 aa).

The 347-residue stretch at 9 to 355 folds into the Asparaginase/glutaminase domain; the sequence is RRLLAVYTGG…DVRKELLTKD (347 aa). The active-site Acyl-ester intermediate is the Thr-19. An asparaginase region spans residues 41–350; that stretch reads TLPMFHDEEH…PGLSLDVRKE (310 aa). Substrate is bound by residues 84-86 and 116-117; these read DSS and TD. ANK repeat units follow at residues 141-170, 399-429, 433-462, 466-495, and 533-562; these read GAQVPIHALWSDGRENLLGALLMAGQYVIP, ALVPSLACAAAHAGDVEALQALVELGSDLGL, NGQTPLHAAARGGHTEAVTMLLQRGVDVNT, DGFSPLLLAVRGRHPGVIGLLREAGASLST, and DGHSALHVAEAAGNLAVVAFLQSLEGAVGA.

In the N-terminal section; belongs to the asparaginase 1 family. In terms of assembly, monomer.

The catalysed reaction is a 1-acyl-sn-glycero-3-phosphocholine + H2O = sn-glycerol 3-phosphocholine + a fatty acid + H(+). It carries out the reaction L-asparagine + H2O = L-aspartate + NH4(+). The enzyme catalyses a 1-O-alkyl-2-acetyl-sn-glycero-3-phosphocholine + H2O = a 1-O-alkyl-sn-glycero-3-phosphocholine + acetate + H(+). It catalyses the reaction 1-hexadecanoyl-sn-glycero-3-phosphocholine + H2O = sn-glycerol 3-phosphocholine + hexadecanoate + H(+). The catalysed reaction is 2 1-hexadecanoyl-sn-glycero-3-phosphocholine = 1,2-dihexadecanoyl-sn-glycero-3-phosphocholine + sn-glycerol 3-phosphocholine. It carries out the reaction 1-octadecanoyl-sn-glycero-3-phosphocholine + H2O = octadecanoate + sn-glycerol 3-phosphocholine + H(+). The enzyme catalyses 1-(9Z-octadecenoyl)-sn-glycero-3-phosphocholine + H2O = sn-glycerol 3-phosphocholine + (9Z)-octadecenoate + H(+). It catalyses the reaction 1-hexadecanoyl-sn-glycero-3-phosphoethanolamine + H2O = sn-glycero-3-phosphoethanolamine + hexadecanoate + H(+). The catalysed reaction is 1-(9Z-octadecenoyl)-sn-glycero-3-phosphoethanolamine + H2O = sn-glycero-3-phosphoethanolamine + (9Z)-octadecenoate + H(+). It carries out the reaction 1-hexadecanoyl-sn-glycero-3-phosphoethanolamine + 1-hexadecanoyl-sn-glycero-3-phosphocholine = 1,2-dihexadecanoyl-sn-glycero-3-phosphoethanolamine + sn-glycerol 3-phosphocholine. The enzyme catalyses 2-(5Z,8Z,11Z,14Z)-eicosatetraenoyl-sn-glycero-3-phosphocholine + H2O = sn-glycerol 3-phosphocholine + (5Z,8Z,11Z,14Z)-eicosatetraenoate + H(+). It catalyses the reaction 2-hexadecanoyl-sn-glycero-3-phosphocholine + H2O = sn-glycerol 3-phosphocholine + hexadecanoate + H(+). The catalysed reaction is 2 2-hexadecanoyl-sn-glycero-3-phosphocholine = 1,2-dihexadecanoyl-sn-glycero-3-phosphocholine + sn-glycerol 3-phosphocholine. It carries out the reaction 1-O-(9Z)-octadecenoyl-2-O-acetyl-sn-glycero-3-phosphocholine + H2O = 2-acetyl-sn-glycero-3-phosphocholine + (9Z)-octadecenoate + H(+). The enzyme catalyses a 1-acyl-sn-glycero-3-phospho-(1D-myo-inositol) + 1-hexadecanoyl-sn-glycero-3-phosphocholine = a 1-acyl-2-hexadecanoyl-sn-glycero-3-phospho-(1D-myo-inositol) + sn-glycerol 3-phosphocholine. It catalyses the reaction 2 2-(5Z,8Z,11Z,14Z)-eicosatetraenoyl-sn-glycero-3-phosphocholine = 1,2-di-(5Z,8Z,11Z,14Z-eicosatetraenoyl)-sn-glycero-3-phosphocholine + sn-glycerol 3-phosphocholine. Its function is as follows. Exhibits lysophospholipase, transacylase, PAF acetylhydrolase and asparaginase activities. Can catalyze three types of transacylation reactions: (1) acyl transfer from 1-acyl-sn-glycero-3-phosphocholine (1-acyl-GPC) to the sn-1(3) positions of glycerol and 2-acylglycerol (sn-1 to -1(3) transfer), (2) acyl transfer from 1-acyl-GPC to the sn-2 positions of 1-acyl-GPC, 1-acyl-sn-glycero-3-phosphoethanolamine (1-acyl-GPE), and other lysophospholipids (sn-1 to -2 transfer) and (3) acyl transfer from 2-acyl-GPC to the sn-1 position of 2-acyl-GPC and 2-acyl-GPE (sn-2 to -1 transfer). Mediates the synthesis of 1-arachidonoyl species of phospholipids by transferring the arachidonoyl residue from 2-arachidonoyl lysophospholipid to the sn-1 position of 2-acyl lysophospholipid. The protein is 60 kDa lysophospholipase (ASPG) of Homo sapiens (Human).